The chain runs to 242 residues: Probable transcriptional regulatory protein XOO1543 (242 aa).

The protein belongs to the TACO1 family.

The protein localises to the cytoplasm. The protein is Probable transcriptional regulatory protein XOO1543 of Xanthomonas oryzae pv. oryzae (strain MAFF 311018).